A 240-amino-acid chain; its full sequence is 2,3,4,5-tetrahydropyridine-2,6-dicarboxylate N-acetyltransferase (240 aa).

It belongs to the transferase hexapeptide repeat family. DapH subfamily.

It catalyses the reaction (S)-2,3,4,5-tetrahydrodipicolinate + acetyl-CoA + H2O = L-2-acetamido-6-oxoheptanedioate + CoA. The protein operates within amino-acid biosynthesis; L-lysine biosynthesis via DAP pathway; LL-2,6-diaminopimelate from (S)-tetrahydrodipicolinate (acetylase route): step 1/3. Functionally, catalyzes the transfer of an acetyl group from acetyl-CoA to tetrahydrodipicolinate. The polypeptide is 2,3,4,5-tetrahydropyridine-2,6-dicarboxylate N-acetyltransferase (Bacillus cereus (strain G9842)).